The chain runs to 564 residues: Dihydropyrimidinase-related protein 5 (564 aa).

2 positions are modified to phosphothreonine: T509 and T514. Phosphoserine occurs at positions 532 and 538. Omega-N-methylarginine is present on R559.

The protein belongs to the metallo-dependent hydrolases superfamily. Hydantoinase/dihydropyrimidinase family. As to quaternary structure, homotetramer, and heterotetramer with other DPYS-like proteins. Interacts with DPYSL2, DPYSL3 and DPYSL4. Interacts with MAP2 and TUBB3. In terms of tissue distribution, highly expressed in embryonic and early postnatal brain and spinal cord.

The protein resides in the cytoplasm. Functionally, involved in the negative regulation of dendrite outgrowth. This is Dihydropyrimidinase-related protein 5 (Dpysl5) from Rattus norvegicus (Rat).